Here is a 298-residue protein sequence, read N- to C-terminus: tRNA dimethylallyltransferase (298 aa).

16-23 lines the ATP pocket; the sequence is GPTASGKS. 18–23 serves as a coordination point for substrate; the sequence is TASGKS. Interaction with substrate tRNA regions lie at residues 41–44 and 165–169; these read DSMQ and QRIVR.

It belongs to the IPP transferase family. In terms of assembly, monomer. The cofactor is Mg(2+).

The enzyme catalyses adenosine(37) in tRNA + dimethylallyl diphosphate = N(6)-dimethylallyladenosine(37) in tRNA + diphosphate. Its function is as follows. Catalyzes the transfer of a dimethylallyl group onto the adenine at position 37 in tRNAs that read codons beginning with uridine, leading to the formation of N6-(dimethylallyl)adenosine (i(6)A). This Rhizobium rhizogenes (strain K84 / ATCC BAA-868) (Agrobacterium radiobacter) protein is tRNA dimethylallyltransferase.